The following is a 325-amino-acid chain: Holliday junction branch migration complex subunit RuvB (325 aa).

The tract at residues 1–181 is large ATPase domain (RuvB-L); sequence MENRLINPVE…FGIVQRLEFY (181 aa). ATP is bound by residues I20, R21, G62, K65, T66, T67, 128–130, R171, Y181, and R218; that span reads EDF. T66 serves as a coordination point for Mg(2+). Residues 182–252 form a small ATPAse domain (RuvB-S) region; the sequence is NIEDLTTIVS…IADSALDMLA (71 aa). The segment at 255–325 is head domain (RuvB-H); it reads RRGLDHLDRR…VLTQMAIDQL (71 aa). Residues R291, R310, and R315 each coordinate DNA.

The protein belongs to the RuvB family. As to quaternary structure, homohexamer. Forms an RuvA(8)-RuvB(12)-Holliday junction (HJ) complex. HJ DNA is sandwiched between 2 RuvA tetramers; dsDNA enters through RuvA and exits via RuvB. An RuvB hexamer assembles on each DNA strand where it exits the tetramer. Each RuvB hexamer is contacted by two RuvA subunits (via domain III) on 2 adjacent RuvB subunits; this complex drives branch migration. In the full resolvosome a probable DNA-RuvA(4)-RuvB(12)-RuvC(2) complex forms which resolves the HJ.

The protein localises to the cytoplasm. The enzyme catalyses ATP + H2O = ADP + phosphate + H(+). In terms of biological role, the RuvA-RuvB-RuvC complex processes Holliday junction (HJ) DNA during genetic recombination and DNA repair, while the RuvA-RuvB complex plays an important role in the rescue of blocked DNA replication forks via replication fork reversal (RFR). RuvA specifically binds to HJ cruciform DNA, conferring on it an open structure. The RuvB hexamer acts as an ATP-dependent pump, pulling dsDNA into and through the RuvAB complex. RuvB forms 2 homohexamers on either side of HJ DNA bound by 1 or 2 RuvA tetramers; 4 subunits per hexamer contact DNA at a time. Coordinated motions by a converter formed by DNA-disengaged RuvB subunits stimulates ATP hydrolysis and nucleotide exchange. Immobilization of the converter enables RuvB to convert the ATP-contained energy into a lever motion, pulling 2 nucleotides of DNA out of the RuvA tetramer per ATP hydrolyzed, thus driving DNA branch migration. The RuvB motors rotate together with the DNA substrate, which together with the progressing nucleotide cycle form the mechanistic basis for DNA recombination by continuous HJ branch migration. Branch migration allows RuvC to scan DNA until it finds its consensus sequence, where it cleaves and resolves cruciform DNA. This chain is Holliday junction branch migration complex subunit RuvB, found in Psychrobacter sp. (strain PRwf-1).